The chain runs to 464 residues: tRNA modification GTPase MnmE (464 aa).

3 residues coordinate (6S)-5-formyl-5,6,7,8-tetrahydrofolate: R25, E87, and K130. Residues 226–386 (GLSVVLAGQP…LRAELLRIAG (161 aa)) form the TrmE-type G domain. N236 lines the K(+) pocket. GTP contacts are provided by residues 236-241 (NVGKSS), 255-261 (TPIAGTT), and 280-283 (DTAG). S240 provides a ligand contact to Mg(2+). K(+)-binding residues include T255, I257, and T260. Position 261 (T261) interacts with Mg(2+). Residue K464 coordinates (6S)-5-formyl-5,6,7,8-tetrahydrofolate.

Belongs to the TRAFAC class TrmE-Era-EngA-EngB-Septin-like GTPase superfamily. TrmE GTPase family. Homodimer. Heterotetramer of two MnmE and two MnmG subunits. K(+) is required as a cofactor.

The protein localises to the cytoplasm. Functionally, exhibits a very high intrinsic GTPase hydrolysis rate. Involved in the addition of a carboxymethylaminomethyl (cmnm) group at the wobble position (U34) of certain tRNAs, forming tRNA-cmnm(5)s(2)U34. In Burkholderia ambifaria (strain MC40-6), this protein is tRNA modification GTPase MnmE.